The chain runs to 362 residues: Protein RecA (362 aa).

G65–T72 lines the ATP pocket. Residues R323 to E362 form a disordered region. Positions L331–E362 are enriched in basic and acidic residues.

It belongs to the RecA family.

The protein localises to the cytoplasm. Functionally, can catalyze the hydrolysis of ATP in the presence of single-stranded DNA, the ATP-dependent uptake of single-stranded DNA by duplex DNA, and the ATP-dependent hybridization of homologous single-stranded DNAs. It interacts with LexA causing its activation and leading to its autocatalytic cleavage. The sequence is that of Protein RecA from Limosilactobacillus reuteri (strain DSM 20016) (Lactobacillus reuteri).